Here is a 142-residue protein sequence, read N- to C-terminus: ATP synthase epsilon chain (142 aa).

The protein belongs to the ATPase epsilon chain family. As to quaternary structure, F-type ATPases have 2 components, CF(1) - the catalytic core - and CF(0) - the membrane proton channel. CF(1) has five subunits: alpha(3), beta(3), gamma(1), delta(1), epsilon(1). CF(0) has three main subunits: a, b and c.

The protein resides in the cell inner membrane. Produces ATP from ADP in the presence of a proton gradient across the membrane. This is ATP synthase epsilon chain from Shewanella frigidimarina (strain NCIMB 400).